Consider the following 108-residue polypeptide: MSQGVEFNRLMLDMRAMQMDAMSQPKSAAVAEVSGSSFADMLGQAVNKVNDTQQASNQLSSAFEIGKSGVDLTDVMISSQKASVSFQALTQVRNKLVQAYQDIMQMPV.

This sequence belongs to the FliE family.

It localises to the bacterial flagellum basal body. The chain is Flagellar hook-basal body complex protein FliE from Pseudomonas fluorescens (strain ATCC BAA-477 / NRRL B-23932 / Pf-5).